The sequence spans 65 residues: Beta-defensin 17 (65 aa).

The N-terminal stretch at 1–19 is a signal peptide; that stretch reads MKFHLLFFILLFSITILTG. Cystine bridges form between Cys35–Cys63, Cys42–Cys56, and Cys46–Cys64.

It belongs to the beta-defensin family.

The protein resides in the secreted. Has antibacterial activity. The polypeptide is Beta-defensin 17 (Defb17) (Rattus norvegicus (Rat)).